A 952-amino-acid chain; its full sequence is Probable outer membrane protein pmp16 (952 aa).

The first 27 residues, 1-27 (MSKTPPKFLFYLGNFTACMFGMTPAVY), serve as a signal peptide directing secretion. In terms of domain architecture, Autotransporter spans 646-952 (GDLATTPLWQ…HLQAGSTLKF (307 aa)).

Belongs to the PMP outer membrane protein family.

The protein resides in the secreted. Its subcellular location is the cell wall. It is found in the cell outer membrane. This Chlamydia pneumoniae (Chlamydophila pneumoniae) protein is Probable outer membrane protein pmp16 (pmp16).